Reading from the N-terminus, the 137-residue chain is Small ribosomal subunit protein uS12 (137 aa).

It belongs to the universal ribosomal protein uS12 family. Part of the 30S ribosomal subunit. Contacts proteins S8 and S17. May interact with IF1 in the 30S initiation complex.

Its function is as follows. With S4 and S5 plays an important role in translational accuracy. In terms of biological role, interacts with and stabilizes bases of the 16S rRNA that are involved in tRNA selection in the A site and with the mRNA backbone. Located at the interface of the 30S and 50S subunits, it traverses the body of the 30S subunit contacting proteins on the other side and probably holding the rRNA structure together. The combined cluster of proteins S8, S12 and S17 appears to hold together the shoulder and platform of the 30S subunit. This is Small ribosomal subunit protein uS12 from Lactiplantibacillus plantarum (strain ATCC BAA-793 / NCIMB 8826 / WCFS1) (Lactobacillus plantarum).